The primary structure comprises 332 residues: Glycerol-3-phosphate dehydrogenase [NAD(P)+] (332 aa).

Residues Ser-10, Trp-11, Lys-31, and Lys-105 each contribute to the NADPH site. Sn-glycerol 3-phosphate-binding residues include Lys-105, Gly-136, and Ser-138. Position 140 (Ala-140) interacts with NADPH. The sn-glycerol 3-phosphate site is built by Lys-191, Asp-244, Ser-254, Arg-255, and Asn-256. Lys-191 functions as the Proton acceptor in the catalytic mechanism. NADPH is bound at residue Arg-255. Positions 279 and 281 each coordinate NADPH.

The protein belongs to the NAD-dependent glycerol-3-phosphate dehydrogenase family.

It localises to the cytoplasm. It carries out the reaction sn-glycerol 3-phosphate + NAD(+) = dihydroxyacetone phosphate + NADH + H(+). The catalysed reaction is sn-glycerol 3-phosphate + NADP(+) = dihydroxyacetone phosphate + NADPH + H(+). The protein operates within membrane lipid metabolism; glycerophospholipid metabolism. Its function is as follows. Catalyzes the reduction of the glycolytic intermediate dihydroxyacetone phosphate (DHAP) to sn-glycerol 3-phosphate (G3P), the key precursor for phospholipid synthesis. This chain is Glycerol-3-phosphate dehydrogenase [NAD(P)+], found in Anaeromyxobacter dehalogenans (strain 2CP-C).